Reading from the N-terminus, the 737-residue chain is UPF0507 protein YML002W (737 aa).

Positions 1-83 constitute a VPS9 domain; sequence MDSHQLELPD…FEDFNKNTGN (83 aa).

This sequence belongs to the UPF0507 family.

This is UPF0507 protein YML002W from Saccharomyces cerevisiae (strain ATCC 204508 / S288c) (Baker's yeast).